Here is a 118-residue protein sequence, read N- to C-terminus: Non-specific lipid-transfer protein 1 (118 aa).

An N-terminal signal peptide occupies residues 1–25 (MAGVMKLACLLLACMIVAGPITSNA). 4 cysteine pairs are disulfide-bonded: Cys-29/Cys-76, Cys-39/Cys-53, Cys-54/Cys-100, and Cys-74/Cys-114.

The protein belongs to the plant LTP family. Expressed primarily in epidermal cells.

The protein localises to the secreted. The protein resides in the cell wall. Functionally, plant non-specific lipid-transfer proteins transfer phospholipids as well as galactolipids across membranes. May play a role in wax or cutin deposition in the cell walls of expanding epidermal cells and certain secretory tissues. This chain is Non-specific lipid-transfer protein 1 (LTP1), found in Arabidopsis thaliana (Mouse-ear cress).